The following is a 478-amino-acid chain: Ribulose bisphosphate carboxylase large chain (478 aa).

A propeptide spanning residues 1-2 (MS) is cleaved from the precursor. Pro3 is subject to N-acetylproline. Lys14 bears the N6,N6,N6-trimethyllysine mark. 2 residues coordinate substrate: Asn123 and Thr173. Residue Lys175 is the Proton acceptor of the active site. Lys177 is a binding site for substrate. Positions 201, 203, and 204 each coordinate Mg(2+). Lys201 is modified (N6-carboxylysine). The active-site Proton acceptor is His294. Arg295, His327, and Ser379 together coordinate substrate.

The protein belongs to the RuBisCO large chain family. Type I subfamily. Heterohexadecamer of 8 large chains and 8 small chains; disulfide-linked. The disulfide link is formed within the large subunit homodimers. Mg(2+) is required as a cofactor. Post-translationally, the disulfide bond which can form in the large chain dimeric partners within the hexadecamer appears to be associated with oxidative stress and protein turnover.

It is found in the plastid. It localises to the chloroplast. The enzyme catalyses 2 (2R)-3-phosphoglycerate + 2 H(+) = D-ribulose 1,5-bisphosphate + CO2 + H2O. It carries out the reaction D-ribulose 1,5-bisphosphate + O2 = 2-phosphoglycolate + (2R)-3-phosphoglycerate + 2 H(+). RuBisCO catalyzes two reactions: the carboxylation of D-ribulose 1,5-bisphosphate, the primary event in carbon dioxide fixation, as well as the oxidative fragmentation of the pentose substrate in the photorespiration process. Both reactions occur simultaneously and in competition at the same active site. The sequence is that of Ribulose bisphosphate carboxylase large chain from Lemna minor (Common duckweed).